Consider the following 159-residue polypeptide: Kojic acid related protein 6 (159 aa).

Its function is as follows. Negatively regulates mycelium growth and conidial formation and is required for stress tolerance. Plays a role in kojic acid synthesis in coordination with kojA, kojR and kojT where it acts upstream of kojA. The chain is Kojic acid related protein 6 from Aspergillus oryzae (strain ATCC 42149 / RIB 40) (Yellow koji mold).